The following is a 389-amino-acid chain: MSKHDKPLDFLWFIPTSGDGSYLGSDDLSRPADPGYFREIAQAADRLGYSGVLIPTGVACEESFILAANLAAYTEKLKFLVAIRPGVASPAYYARLASTLDRVSHGRLLLNIVVGGSAQELAGDGIFLPHDERYDHADEFFQVFNSLIETGKGDLDGKYIKAQGARLGLPPVQEPRPPLYFGGSSDAGIEFSAGITDKYLTWGEPPAQVAEKIVKVRAAAAKNGREVTFGIRLHFIVRETDEEAWADADRLISKLSDETIASAQEVFSKASDSVGQARMQALHNGRRDKLEVSPNLWAGIGLVRSGAGTALVGSPKTVAARLREYQALGIDTVIASGYPHLEEAYRLSELLFPEIGIDGPRNQIRSSFGAKQVFGGGGHGGNVKLVSGS.

The protein belongs to the SsuD family.

It catalyses the reaction an alkanesulfonate + FMNH2 + O2 = an aldehyde + FMN + sulfite + H2O + 2 H(+). Functionally, catalyzes the desulfonation of aliphatic sulfonates. The sequence is that of Alkanesulfonate monooxygenase from Agrobacterium fabrum (strain C58 / ATCC 33970) (Agrobacterium tumefaciens (strain C58)).